The chain runs to 4998 residues: SCO-spondin (4998 aa).

Residues 1 to 17 (MLPLALLFGMLWTQANG) form the signal peptide. The 85-residue stretch at 18 to 102 (HWCEQIETVH…ACCPGWGGAH (85 aa)) folds into the EMI domain. The region spanning 72 to 241 (GLCAIYKPPE…KLPGSEPGCL (170 aa)) is the VWFD 1 domain. 2 cysteine pairs are disulfide-bonded: Cys74-Cys202 and Cys103-Cys240. N-linked (GlcNAc...) asparagine glycosylation is found at Asn88 and Asn130. Residues 349–404 (CPGGQLYSDCVSSCPPSCSAVAQGEEGSCGKECVSGCECPTGLFWDGALCVPAAHC) form the TIL 1 domain. The 93-residue stretch at 404–496 (CPCYHRRQRY…HGACDTGSCL (93 aa)) folds into the VWFC 1 domain. One can recognise a VWFD 2 domain in the interval 442–615 (AECAVGGDGH…FQVSGDGRCP (174 aa)). 2 cysteine pairs are disulfide-bonded: Cys444/Cys577 and Cys468/Cys614. N-linked (GlcNAc...) asparagine glycans are attached at residues Asn534 and Asn698. In terms of domain architecture, TIL 2 spans 706-759 (CPGGQVYQECAPVCGHHCGEPEDCKELGICVAGCNCPPGLLWDLEGQCVPPSMC). N-linked (GlcNAc...) asparagine glycosylation is found at Asn771, Asn790, Asn824, and Asn866. The VWFD 3 domain maps to 892-1062 (GWCQASGAPH…HSWRLNPLCP (171 aa)). 3 disulfides stabilise this stretch: Cys894-Cys1026, Cys916-Cys1061, and Cys937-Cys944. Positions 1153–1209 (CEGGQVYEPCGSTCPPTCHDHHSELRWHCQVITCVEGCFCPEGTLLHGGACMKLAAC) constitute a TIL 3 domain. The N-linked (GlcNAc...) asparagine glycan is linked to Asn1230. 4 LDL-receptor class A domains span residues 1253 to 1290 (GCAE…EGCA), 1293 to 1328 (VCGE…EQGC), 1329 to 1365 (LCPH…ESCL), and 1369 to 1407 (SCIS…SHCS). Cystine bridges form between Cys1254–Cys1267, Cys1261–Cys1280, Cys1274–Cys1289, Cys1294–Cys1306, Cys1301–Cys1319, Cys1313–Cys1328, Cys1330–Cys1342, Cys1337–Cys1355, Cys1349–Cys1364, Cys1370–Cys1382, Cys1377–Cys1395, and Cys1389–Cys1406. The disordered stretch occupies residues 1406-1440 (CSLPSLPTPPGGIGQNPSTSSLDTAPSPVGSTSPA). The span at 1420-1440 (QNPSTSSLDTAPSPVGSTSPA) shows a compositional bias: polar residues. LDL-receptor class A domains are found at residues 1442 to 1478 (PCSL…LDCG) and 1480 to 1519 (PCML…DVCE). Disulfide bonds link Cys1443-Cys1455, Cys1450-Cys1468, Cys1462-Cys1477, Cys1481-Cys1494, Cys1488-Cys1507, and Cys1501-Cys1518. N-linked (GlcNAc...) asparagine glycosylation occurs at Asn1528. The LDL-receptor class A 7 domain maps to 1533-1571 (PCPEFSCPDGTCIDFLLVCDGNPDCELADETEPSLDEQG). Disulfide bonds link Cys1534-Cys1544, Cys1539-Cys1557, Cys1551-Cys1572, Cys1584-Cys1620, Cys1588-Cys1625, Cys1599-Cys1610, Cys1640-Cys1680, Cys1644-Cys1685, and Cys1654-Cys1664. TSP type-1 domains are found at residues 1572–1626 (CGAW…EACP) and 1628–1686 (DGEW…EGCL). An N-linked (GlcNAc...) asparagine glycan is attached at Asn1598. N-linked (GlcNAc...) asparagine glycosylation occurs at Asn1687. Residues 1692–1746 (GELVFRTCAPCPLTCDDISGQAACPPDRPCSSPGCWCPDGKVLNTEGQCVRPRQC) form the TIL 4 domain. 2 consecutive EGF-like domains span residues 1702–1741 (CPLT…GQCV) and 1742–1768 (RPRQ…CQLC). The TSP type-1 3 domain maps to 1771-1827 (DCGWSSWSPWAECLGPCSSQSLQWSFRSPNNPRLSGHGRQCRGIHRKARRCQTEACE). Cystine bridges form between Cys1772/Cys1811, Cys1783/Cys1787, and Cys1821/Cys1826. The VWFC 2 domain maps to 1827–1887 (EGCEQWGLMY…GMGESCCHCA (61 aa)). N-linked (GlcNAc...) asparagine glycosylation is found at Asn1892 and Asn1989. Residues 1929–2085 (CYSPLGLAGL…IFLWVELLGL (157 aa)) enclose the F5/8 type C domain. The region spanning 2091 to 2127 (LCPGSRHRCASGECAPKGGPCDGAVDCDDGSDEEGCG) is the LDL-receptor class A 8 domain. 3 disulfide bridges follow: Cys2092–Cys2104, Cys2099–Cys2117, and Cys2111–Cys2126. The disordered stretch occupies residues 2119–2209 (DGSDEEGCGS…TFPPGAKSLH (91 aa)). Residues 2130 to 2144 (HASTTSRTPALSPTQ) are compositionally biased toward polar residues. Residues 2148-2158 (FPREVSEDLRQ) show a composition bias toward basic and acidic residues. Composition is skewed to polar residues over residues 2164–2173 (TSHSPPSSGE) and 2190–2201 (QPMQTLSATSTF). 2 consecutive LDL-receptor class A domains span residues 2242–2278 (PCGP…QHCA) and 2299–2335 (LCSP…DNCV). Disulfide bonds link Cys2243/Cys2255, Cys2250/Cys2268, Cys2262/Cys2277, Cys2300/Cys2312, Cys2307/Cys2325, Cys2319/Cys2334, Cys2337/Cys2373, Cys2348/Cys2352, Cys2383/Cys2388, Cys2403/Cys2440, Cys2407/Cys2445, and Cys2418/Cys2430. TSP type-1 domains lie at 2336-2389 (DCVL…QACP) and 2391-2446 (AGAW…QLCP). Residues 2468-2511 (VPPCPPSCLDPEANRSCSGHCMEGCRCPPGLLLQDSHCLPLSEC) enclose the TIL 5 domain. Residues Asn2481 and Asn2530 are each glycosylated (N-linked (GlcNAc...) asparagine). TSP type-1 domains follow at residues 2551–2605 (SCGW…TDCG), 2609–2664 (PGWT…PVCP), and 2666–2719 (PSAW…HPCT). Cystine bridges form between Cys2552-Cys2590, Cys2563-Cys2567, Cys2600-Cys2604, Cys2620-Cys2658, Cys2624-Cys2663, Cys2640-Cys2648, Cys2678-Cys2713, Cys2682-Cys2718, and Cys2693-Cys2703. Residues Asn2772 and Asn2802 are each glycosylated (N-linked (GlcNAc...) asparagine). TSP type-1 domains are found at residues 2820-2875 (ACGW…RPCR) and 2876-2919 (GPGA…QPCA). Intrachain disulfides connect Cys2821/Cys2859, Cys2832/Cys2836, and Cys2869/Cys2874. 4 N-linked (GlcNAc...) asparagine glycosylation sites follow: Asn2897, Asn2952, Asn2999, and Asn3009. The region spanning 2926 to 2978 (CPEDQQWLDCAQGPASCAHLSIPGEANQTCHPGCYCLSGMLLLNNVCVPVQDC) is the TIL 6 domain. TSP type-1 domains follow at residues 3019–3086 (QPAW…PGCN) and 3088–3143 (AGGW…QPCP). 6 cysteine pairs are disulfide-bonded: Cys3031-Cys3080, Cys3035-Cys3085, Cys3046-Cys3070, Cys3100-Cys3137, Cys3104-Cys3142, and Cys3115-Cys3127. Residue Asn3146 is glycosylated (N-linked (GlcNAc...) asparagine). A TIL 7 domain is found at 3151-3201 (EGAEYSPCGPPCPRSCDDLVHCVWRCQPGCYCPLGKVLSADGAICVKPSYC). An N-linked (GlcNAc...) asparagine glycan is attached at Asn3235. TSP type-1 domains lie at 3244–3306 (SGDW…TACP) and 3308–3363 (DGAW…TLCT). 6 cysteine pairs are disulfide-bonded: Cys3256–Cys3299, Cys3260–Cys3305, Cys3271–Cys3283, Cys3320–Cys3355, Cys3323–Cys3362, and Cys3333–Cys3345. Asn3301 carries N-linked (GlcNAc...) asparagine glycosylation. Asn3357 carries an N-linked (GlcNAc...) asparagine glycan. The TIL 8 domain occupies 3365-3421 (CGGGQDLLPCGQPCPHSCQDLSLGSTCQPGSAGCQSGCGCPPGQLSQDGLCVFPVDC). 2 N-linked (GlcNAc...) asparagine glycosylation sites follow: Asn3435 and Asn3462. Positions 3481-3529 (PGIWSSWGPWEKCSVSCGGGEQLRSRQCARPPCPGLAQQSRICHIHVCR) constitute a TSP type-1 15 domain. 3 disulfide bridges follow: Cys3493/Cys3523, Cys3497/Cys3528, and Cys3508/Cys3513. N-linked (GlcNAc...) asparagine glycosylation is present at Asn3638. 4 consecutive TSP type-1 domains span residues 3657–3713 (HGSF…PECP), 3727–3779 (AGGW…PSCA), 3793–3849 (NCFW…RACP), and 3851–3906 (PGGW…MPCE). Intrachain disulfides connect Cys3669–Cys3707, Cys3673–Cys3712, and Cys3685–Cys3697. The N-linked (GlcNAc...) asparagine glycan is linked to Asn3761. 6 cysteine pairs are disulfide-bonded: Cys3794/Cys3830, Cys3805/Cys3809, Cys3843/Cys3848, Cys3863/Cys3900, Cys3867/Cys3905, and Cys3878/Cys3890. A TIL 9 domain is found at 3909-3964 (CPAGMEMVSCANHCPYSCSDLQEGGMCQEDQACQLGCRCSEGFLEQDGGCVPVGHC). Residue Asn3986 is glycosylated (N-linked (GlcNAc...) asparagine). 4 consecutive TSP type-1 domains span residues 4006 to 4059 (HCAW…VPCP), 4100 to 4155 (PRGW…QLCL), 4157 to 4213 (KLER…GPCQ), and 4215 to 4269 (DCTW…GNCS). Cystine bridges form between Cys4007–Cys4043, Cys4018–Cys4022, Cys4053–Cys4058, Cys4112–Cys4149, Cys4116–Cys4154, Cys4127–Cys4139, Cys4169–Cys4207, Cys4173–Cys4212, Cys4184–Cys4195, Cys4216–Cys4253, Cys4227–Cys4229, and Cys4263–Cys4268. A glycan (N-linked (GlcNAc...) asparagine) is linked at Asn4196. N-linked (GlcNAc...) asparagine glycosylation occurs at Asn4267. The TIL 10 domain occupies 4273 to 4328 (CPPPFEFQSCGSPCAGLCATHLNHRLCQDLPPCQPGCYCPKGLLEQAGSCILPEQC). 2 N-linked (GlcNAc...) asparagine glycosylation sites follow: Asn4408 and Asn4463. The TSP type-1 24 domain maps to 4465–4516 (TCQWGPWGPWSPCQMPCSGGFKLRWRVARDTSAGECPGPWAQTESCNMGSCP). Cystine bridges form between Cys4466/Cys4500, Cys4477/Cys4481, and Cys4510/Cys4515. Residues 4530-4576 (DCANQCPRSCADLWDGVQCLQGPCSPGCRCPPGQLVQDGHCVPISSC) form the TIL 11 domain. N-linked (GlcNAc...) asparagine glycans are attached at residues Asn4584, Asn4601, and Asn4606. The TSP type-1 25 domain maps to 4616-4669 (CPVLGPWSAWSECSAVCGKGTMVRHRSCEEHPDREPCQALDLQQWQECNLQACP). Disulfide bonds link Cys4628–Cys4663, Cys4632–Cys4668, and Cys4643–Cys4652. The TIL 12 domain occupies 4671–4725 (CPPGQVLSTCATMCPSLCSHLWPGTICVREPCQLGCGCPGGQLLYNGTCIPPEAC). 4 N-linked (GlcNAc...) asparagine glycosylation sites follow: Asn4716, Asn4756, Asn4799, and Asn4806. The TIL 13 domain maps to 4777-4835 (CAPGEIWQHGKLGPCEKTCPEMNMTQAWSNCTEAQAPGCVCQLGYFRSQTGLCVPEDHC). Positions 4835–4893 (CECWHHGSPHLPGSEWQEACESCRCLHGKSVCIRHCPELSCAQGEVIMQEPGSCCPICQ) constitute a VWFC 3 domain. Cystine bridges form between Cys4892–Cys4952, Cys4918–Cys4969, Cys4928–Cys4985, and Cys4932–Cys4987. Residues 4892–4991 (CQQDTLKEEP…IHSCQCSACQ (100 aa)) enclose the CTCK domain. Asn4912 is a glycosylation site (N-linked (GlcNAc...) asparagine).

The protein belongs to the thrombospondin family. Subcommissural organ.

It localises to the secreted. It is found in the extracellular space. Its function is as follows. Involved in the modulation of neuronal aggregation. May be involved in developmental events during the formation of the central nervous system. The polypeptide is SCO-spondin (Mus musculus (Mouse)).